Consider the following 58-residue polypeptide: Ribosome biogenesis protein Nop10 (58 aa).

It belongs to the NOP10 family.

Its function is as follows. Involved in ribosome biogenesis; more specifically in 18S rRNA pseudouridylation and in cleavage of pre-rRNA. This is Ribosome biogenesis protein Nop10 from Thermococcus onnurineus (strain NA1).